The following is a 466-amino-acid chain: Ribulose bisphosphate carboxylase large chain (466 aa).

Lys5 carries the post-translational modification N6,N6,N6-trimethyllysine. 2 residues coordinate substrate: Asn114 and Thr164. Lys166 serves as the catalytic Proton acceptor. Substrate is bound at residue Lys168. Positions 192, 194, and 195 each coordinate Mg(2+). Lys192 carries the post-translational modification N6-carboxylysine. The Proton acceptor role is filled by His285. Residues Arg286, His318, and Ser370 each coordinate substrate.

This sequence belongs to the RuBisCO large chain family. Type I subfamily. As to quaternary structure, heterohexadecamer of 8 large chains and 8 small chains; disulfide-linked. The disulfide link is formed within the large subunit homodimers. Requires Mg(2+) as cofactor. The disulfide bond which can form in the large chain dimeric partners within the hexadecamer appears to be associated with oxidative stress and protein turnover.

Its subcellular location is the plastid. It localises to the chloroplast. The enzyme catalyses 2 (2R)-3-phosphoglycerate + 2 H(+) = D-ribulose 1,5-bisphosphate + CO2 + H2O. It carries out the reaction D-ribulose 1,5-bisphosphate + O2 = 2-phosphoglycolate + (2R)-3-phosphoglycerate + 2 H(+). RuBisCO catalyzes two reactions: the carboxylation of D-ribulose 1,5-bisphosphate, the primary event in carbon dioxide fixation, as well as the oxidative fragmentation of the pentose substrate in the photorespiration process. Both reactions occur simultaneously and in competition at the same active site. The protein is Ribulose bisphosphate carboxylase large chain of Adenium obesum (Desert rose).